Consider the following 250-residue polypeptide: Cell division protein ZapD (250 aa).

It belongs to the ZapD family. As to quaternary structure, interacts with FtsZ.

It is found in the cytoplasm. In terms of biological role, cell division factor that enhances FtsZ-ring assembly. Directly interacts with FtsZ and promotes bundling of FtsZ protofilaments, with a reduction in FtsZ GTPase activity. The protein is Cell division protein ZapD of Serratia proteamaculans (strain 568).